A 345-amino-acid chain; its full sequence is Phosphoribosylformylglycinamidine cyclo-ligase (345 aa).

Belongs to the AIR synthase family.

The protein resides in the cytoplasm. It carries out the reaction 2-formamido-N(1)-(5-O-phospho-beta-D-ribosyl)acetamidine + ATP = 5-amino-1-(5-phospho-beta-D-ribosyl)imidazole + ADP + phosphate + H(+). It functions in the pathway purine metabolism; IMP biosynthesis via de novo pathway; 5-amino-1-(5-phospho-D-ribosyl)imidazole from N(2)-formyl-N(1)-(5-phospho-D-ribosyl)glycinamide: step 2/2. The protein is Phosphoribosylformylglycinamidine cyclo-ligase of Cronobacter sakazakii (strain ATCC BAA-894) (Enterobacter sakazakii).